Here is a 92-residue protein sequence, read N- to C-terminus: Small ribosomal subunit protein uS19 (92 aa).

Belongs to the universal ribosomal protein uS19 family.

Its function is as follows. Protein S19 forms a complex with S13 that binds strongly to the 16S ribosomal RNA. The chain is Small ribosomal subunit protein uS19 from Aeromonas hydrophila subsp. hydrophila (strain ATCC 7966 / DSM 30187 / BCRC 13018 / CCUG 14551 / JCM 1027 / KCTC 2358 / NCIMB 9240 / NCTC 8049).